A 368-amino-acid chain; its full sequence is Histidinol-phosphate aminotransferase (368 aa).

Position 223 is an N6-(pyridoxal phosphate)lysine (lysine 223).

Belongs to the class-II pyridoxal-phosphate-dependent aminotransferase family. Histidinol-phosphate aminotransferase subfamily. In terms of assembly, homodimer. Requires pyridoxal 5'-phosphate as cofactor.

The catalysed reaction is L-histidinol phosphate + 2-oxoglutarate = 3-(imidazol-4-yl)-2-oxopropyl phosphate + L-glutamate. The protein operates within amino-acid biosynthesis; L-histidine biosynthesis; L-histidine from 5-phospho-alpha-D-ribose 1-diphosphate: step 7/9. The chain is Histidinol-phosphate aminotransferase from Rhodospirillum rubrum (strain ATCC 11170 / ATH 1.1.1 / DSM 467 / LMG 4362 / NCIMB 8255 / S1).